The sequence spans 267 residues: Integral membrane protein 2C (267 aa).

At T37 the chain carries Phosphothreonine. A helical; Signal-anchor for type II membrane protein membrane pass occupies residues 55-75 (VGGVCYLSMGMVVLLMGLVFA). Positions 136–230 (FGGGDPADII…LCNGKDTYRL (95 aa)) constitute a BRICHOS domain. C163 and C222 are joined by a disulfide. A glycan (N-linked (GlcNAc...) asparagine) is linked at N169.

The protein belongs to the ITM2 family. In terms of assembly, interacts with BACE1. Interacts with APP. Interacts with STMN2. Post-translationally, type I membrane-bound, as well as soluble, furin has a pre-eminent role in ITM2C proteolytic processing. PCSK7 and PCSK5 may also be involved although to a lesser extent. The soluble form of PCSK7 is incapable of processing ITM2C. Fails to undergo shedding by ADAM10 and intramembrane cleavage by SPPL2B. In terms of tissue distribution, high levels in the brain, specifically in the cerebral cortex, medulla, amygdala, hippocampus, thalamus, caudate nucleus, cerebellum, olfactory lobe and spinal cord. Very low levels in other organs.

The protein resides in the lysosome membrane. It is found in the cell membrane. Negative regulator of amyloid-beta peptide production. May inhibit the processing of APP by blocking its access to alpha- and beta-secretase. Binding to the beta-secretase-cleaved APP C-terminal fragment is negligible, suggesting that ITM2C is a poor gamma-secretase cleavage inhibitor. May play a role in TNF-induced cell death and neuronal differentiation. The protein is Integral membrane protein 2C (ITM2C) of Homo sapiens (Human).